The primary structure comprises 424 residues: Probable aminotransferase TAT4 (424 aa).

Belongs to the class-I pyridoxal-phosphate-dependent aminotransferase family. It depends on pyridoxal 5'-phosphate as a cofactor.

The polypeptide is Probable aminotransferase TAT4 (Arabidopsis thaliana (Mouse-ear cress)).